Reading from the N-terminus, the 44-residue chain is DNA-directed RNA polymerase subunit Rpo12 (44 aa).

Cys8, Cys22, and Cys25 together coordinate Zn(2+).

It belongs to the archaeal Rpo12/eukaryotic RPC10 RNA polymerase subunit family. In terms of assembly, part of the RNA polymerase complex. Requires Zn(2+) as cofactor.

The protein resides in the cytoplasm. The catalysed reaction is RNA(n) + a ribonucleoside 5'-triphosphate = RNA(n+1) + diphosphate. DNA-dependent RNA polymerase (RNAP) catalyzes the transcription of DNA into RNA using the four ribonucleoside triphosphates as substrates. This Halobacterium salinarum (strain ATCC 29341 / DSM 671 / R1) protein is DNA-directed RNA polymerase subunit Rpo12.